The sequence spans 232 residues: Imidazole glycerol phosphate synthase subunit HisF (232 aa).

Residues Asp-11 and Asp-130 contribute to the active site.

Belongs to the HisA/HisF family. Heterodimer of HisH and HisF.

Its subcellular location is the cytoplasm. The enzyme catalyses 5-[(5-phospho-1-deoxy-D-ribulos-1-ylimino)methylamino]-1-(5-phospho-beta-D-ribosyl)imidazole-4-carboxamide + L-glutamine = D-erythro-1-(imidazol-4-yl)glycerol 3-phosphate + 5-amino-1-(5-phospho-beta-D-ribosyl)imidazole-4-carboxamide + L-glutamate + H(+). Its pathway is amino-acid biosynthesis; L-histidine biosynthesis; L-histidine from 5-phospho-alpha-D-ribose 1-diphosphate: step 5/9. Its function is as follows. IGPS catalyzes the conversion of PRFAR and glutamine to IGP, AICAR and glutamate. The HisF subunit catalyzes the cyclization activity that produces IGP and AICAR from PRFAR using the ammonia provided by the HisH subunit. The chain is Imidazole glycerol phosphate synthase subunit HisF from Listeria monocytogenes serotype 4a (strain HCC23).